Reading from the N-terminus, the 305-residue chain is UDP-N-acetylenolpyruvoylglucosamine reductase 2 (305 aa).

The region spanning 33–197 (VGGKADVFVA…LEARFELEEG (165 aa)) is the FAD-binding PCMH-type domain. Arg-176 is a catalytic residue. Ser-226 functions as the Proton donor in the catalytic mechanism. Glu-296 is a catalytic residue.

It belongs to the MurB family. The cofactor is FAD.

It is found in the cytoplasm. The catalysed reaction is UDP-N-acetyl-alpha-D-muramate + NADP(+) = UDP-N-acetyl-3-O-(1-carboxyvinyl)-alpha-D-glucosamine + NADPH + H(+). The protein operates within cell wall biogenesis; peptidoglycan biosynthesis. Its function is as follows. Cell wall formation. This chain is UDP-N-acetylenolpyruvoylglucosamine reductase 2, found in Bacillus thuringiensis subsp. konkukian (strain 97-27).